The following is a 239-amino-acid chain: Enolase-phosphatase E1 (239 aa).

Mg(2+) is bound by residues D13 and E15. Substrate is bound by residues 133-134 (SS) and K170. D196 contacts Mg(2+).

The protein belongs to the HAD-like hydrolase superfamily. MasA/MtnC family. In terms of assembly, monomer. It depends on Mg(2+) as a cofactor.

Its subcellular location is the cytoplasm. The protein localises to the nucleus. The enzyme catalyses 5-methylsulfanyl-2,3-dioxopentyl phosphate + H2O = 1,2-dihydroxy-5-(methylsulfanyl)pent-1-en-3-one + phosphate. The protein operates within amino-acid biosynthesis; L-methionine biosynthesis via salvage pathway; L-methionine from S-methyl-5-thio-alpha-D-ribose 1-phosphate: step 3/6. Its pathway is amino-acid biosynthesis; L-methionine biosynthesis via salvage pathway; L-methionine from S-methyl-5-thio-alpha-D-ribose 1-phosphate: step 4/6. Functionally, bifunctional enzyme that catalyzes the enolization of 2,3-diketo-5-methylthiopentyl-1-phosphate (DK-MTP-1-P) into the intermediate 2-hydroxy-3-keto-5-methylthiopentenyl-1-phosphate (HK-MTPenyl-1-P), which is then dephosphorylated to form the acireductone 1,2-dihydroxy-3-keto-5-methylthiopentene (DHK-MTPene). The polypeptide is Enolase-phosphatase E1 (Chaetomium globosum (strain ATCC 6205 / CBS 148.51 / DSM 1962 / NBRC 6347 / NRRL 1970) (Soil fungus)).